We begin with the raw amino-acid sequence, 247 residues long: Triosephosphate isomerase (247 aa).

A substrate-binding site is contributed by 9–11 (NWK). His93 serves as the catalytic Electrophile. Glu163 acts as the Proton acceptor in catalysis. Substrate-binding positions include Gly169, Ser209, and 230 to 231 (GG).

It belongs to the triosephosphate isomerase family. As to quaternary structure, homodimer.

The protein localises to the cytoplasm. The catalysed reaction is D-glyceraldehyde 3-phosphate = dihydroxyacetone phosphate. Its pathway is carbohydrate biosynthesis; gluconeogenesis. It functions in the pathway carbohydrate degradation; glycolysis; D-glyceraldehyde 3-phosphate from glycerone phosphate: step 1/1. In terms of biological role, involved in the gluconeogenesis. Catalyzes stereospecifically the conversion of dihydroxyacetone phosphate (DHAP) to D-glyceraldehyde-3-phosphate (G3P). This chain is Triosephosphate isomerase, found in Dinoroseobacter shibae (strain DSM 16493 / NCIMB 14021 / DFL 12).